The primary structure comprises 201 residues: Holliday junction branch migration complex subunit RuvA (201 aa).

The tract at residues 1-64 (MIGFIRGLLV…EDAHSLFGFG (64 aa)) is domain I. Residues 65-143 (TEAERGLFRS…IGVPSLAPAS (79 aa)) form a domain II region. The tract at residues 144–153 (FAGGAAPLPA) is flexible linker. Residues 153 to 201 (AADPADEAVSALIALGFKPQEANTLVARQAAEGRSAEDLIRAALQSAVR) are domain III.

The protein belongs to the RuvA family. Homotetramer. Forms an RuvA(8)-RuvB(12)-Holliday junction (HJ) complex. HJ DNA is sandwiched between 2 RuvA tetramers; dsDNA enters through RuvA and exits via RuvB. An RuvB hexamer assembles on each DNA strand where it exits the tetramer. Each RuvB hexamer is contacted by two RuvA subunits (via domain III) on 2 adjacent RuvB subunits; this complex drives branch migration. In the full resolvosome a probable DNA-RuvA(4)-RuvB(12)-RuvC(2) complex forms which resolves the HJ.

The protein localises to the cytoplasm. Functionally, the RuvA-RuvB-RuvC complex processes Holliday junction (HJ) DNA during genetic recombination and DNA repair, while the RuvA-RuvB complex plays an important role in the rescue of blocked DNA replication forks via replication fork reversal (RFR). RuvA specifically binds to HJ cruciform DNA, conferring on it an open structure. The RuvB hexamer acts as an ATP-dependent pump, pulling dsDNA into and through the RuvAB complex. HJ branch migration allows RuvC to scan DNA until it finds its consensus sequence, where it cleaves and resolves the cruciform DNA. The sequence is that of Holliday junction branch migration complex subunit RuvA from Methylococcus capsulatus (strain ATCC 33009 / NCIMB 11132 / Bath).